A 118-amino-acid chain; its full sequence is Non-specific lipid-transfer protein D (118 aa).

An N-terminal signal peptide occupies residues 1-25; it reads MAGLMKLACLIFACMIVAGPITSNA. 4 disulfides stabilise this stretch: cysteine 29–cysteine 77, cysteine 39–cysteine 54, cysteine 55–cysteine 100, and cysteine 75–cysteine 114.

Belongs to the plant LTP family.

Its function is as follows. Plant non-specific lipid-transfer proteins transfer phospholipids as well as galactolipids across membranes. May play a role in wax or cutin deposition in the cell walls of expanding epidermal cells and certain secretory tissues. This is Non-specific lipid-transfer protein D (WAX9D) from Brassica oleracea var. italica (Broccoli).